The chain runs to 222 residues: 7-cyano-7-deazaguanine synthase (222 aa).

Residue 14-24 (FSGGQDSTTCL) coordinates ATP. 4 residues coordinate Zn(2+): Cys190, Cys199, Cys202, and Cys205.

Belongs to the QueC family. As to quaternary structure, homodimer. The cofactor is Zn(2+).

It catalyses the reaction 7-carboxy-7-deazaguanine + NH4(+) + ATP = 7-cyano-7-deazaguanine + ADP + phosphate + H2O + H(+). It functions in the pathway purine metabolism; 7-cyano-7-deazaguanine biosynthesis. Functionally, catalyzes the ATP-dependent conversion of 7-carboxy-7-deazaguanine (CDG) to 7-cyano-7-deazaguanine (preQ(0)). This chain is 7-cyano-7-deazaguanine synthase, found in Staphylococcus aureus (strain Mu3 / ATCC 700698).